Reading from the N-terminus, the 637-residue chain is Chaperone protein HtpG (637 aa).

An a; substrate-binding region spans residues 1 to 330 (MATAPASHAF…TEDLPLNISR (330 aa)). The b stretch occupies residues 331–551 (ETLQENVVVR…GGASTSSMDR (221 aa)). The interval 552-637 (LLRVLHKDES…GDWYKAVRGL (86 aa)) is c.

Belongs to the heat shock protein 90 family. As to quaternary structure, homodimer.

Its subcellular location is the cytoplasm. In terms of biological role, molecular chaperone. Has ATPase activity. The polypeptide is Chaperone protein HtpG (Nitratidesulfovibrio vulgaris (strain ATCC 29579 / DSM 644 / CCUG 34227 / NCIMB 8303 / VKM B-1760 / Hildenborough) (Desulfovibrio vulgaris)).